Here is a 141-residue protein sequence, read N- to C-terminus: Acetyltransferase YpeA (141 aa).

The N-acetyltransferase domain maps to 1 to 141 (MEIRVFRQED…GKRLIEDEEY (141 aa)).

It belongs to the acetyltransferase family. YpeA subfamily.

This is Acetyltransferase YpeA from Escherichia coli O157:H7.